The following is a 300-amino-acid chain: Lipoyl synthase 2 (300 aa).

Residues cysteine 46, cysteine 51, cysteine 57, cysteine 72, cysteine 76, cysteine 79, and serine 294 each contribute to the [4Fe-4S] cluster site. Residues tyrosine 58–serine 283 form the Radical SAM core domain.

It belongs to the radical SAM superfamily. Lipoyl synthase family. It depends on [4Fe-4S] cluster as a cofactor.

It localises to the cytoplasm. The enzyme catalyses [[Fe-S] cluster scaffold protein carrying a second [4Fe-4S](2+) cluster] + N(6)-octanoyl-L-lysyl-[protein] + 2 oxidized [2Fe-2S]-[ferredoxin] + 2 S-adenosyl-L-methionine + 4 H(+) = [[Fe-S] cluster scaffold protein] + N(6)-[(R)-dihydrolipoyl]-L-lysyl-[protein] + 4 Fe(3+) + 2 hydrogen sulfide + 2 5'-deoxyadenosine + 2 L-methionine + 2 reduced [2Fe-2S]-[ferredoxin]. It functions in the pathway protein modification; protein lipoylation via endogenous pathway; protein N(6)-(lipoyl)lysine from octanoyl-[acyl-carrier-protein]: step 2/2. Functionally, catalyzes the radical-mediated insertion of two sulfur atoms into the C-6 and C-8 positions of the octanoyl moiety bound to the lipoyl domains of lipoate-dependent enzymes, thereby converting the octanoylated domains into lipoylated derivatives. This chain is Lipoyl synthase 2, found in Nostoc sp. (strain PCC 7120 / SAG 25.82 / UTEX 2576).